Consider the following 354-residue polypeptide: Histidinol-phosphate aminotransferase (354 aa).

Lys-210 carries the N6-(pyridoxal phosphate)lysine modification.

Belongs to the class-II pyridoxal-phosphate-dependent aminotransferase family. Histidinol-phosphate aminotransferase subfamily. Homodimer. Pyridoxal 5'-phosphate serves as cofactor.

The catalysed reaction is L-histidinol phosphate + 2-oxoglutarate = 3-(imidazol-4-yl)-2-oxopropyl phosphate + L-glutamate. It functions in the pathway amino-acid biosynthesis; L-histidine biosynthesis; L-histidine from 5-phospho-alpha-D-ribose 1-diphosphate: step 7/9. This chain is Histidinol-phosphate aminotransferase, found in Clostridium botulinum (strain Kyoto / Type A2).